Here is a 94-residue protein sequence, read N- to C-terminus: Cystatin-A1 (94 aa).

Residues glutamine 45–glycine 49 carry the Secondary area of contact motif.

It belongs to the cystatin family.

It localises to the cytoplasm. Functionally, intracellular thiol proteinase inhibitor. Inhibits papain, but not cathepsin B. This is Cystatin-A1 (cpiA) from Dictyostelium discoideum (Social amoeba).